The following is a 682-amino-acid chain: Potassium-transporting ATPase ATP-binding subunit (682 aa).

The next 4 helical transmembrane spans lie at 34-54 (PVMF…IAMA), 62-82 (ALFS…ANFA), 219-239 (IALT…TATL), and 254-274 (VLVA…LSAI). Asp-307 acts as the 4-aspartylphosphate intermediate in catalysis. Residues Asp-344, Glu-348, 377-384 (FTAQSRMS), and Lys-395 each bind ATP. Asp-518 and Asp-522 together coordinate Mg(2+). The next 3 helical transmembrane spans lie at 588–608 (FAII…LNIM), 616–636 (AILS…PLAL), and 656–676 (IYGL…DLLL).

Belongs to the cation transport ATPase (P-type) (TC 3.A.3) family. Type IA subfamily. The system is composed of three essential subunits: KdpA, KdpB and KdpC.

The protein localises to the cell inner membrane. The catalysed reaction is K(+)(out) + ATP + H2O = K(+)(in) + ADP + phosphate + H(+). Its function is as follows. Part of the high-affinity ATP-driven potassium transport (or Kdp) system, which catalyzes the hydrolysis of ATP coupled with the electrogenic transport of potassium into the cytoplasm. This subunit is responsible for energy coupling to the transport system and for the release of the potassium ions to the cytoplasm. The chain is Potassium-transporting ATPase ATP-binding subunit from Escherichia coli O17:K52:H18 (strain UMN026 / ExPEC).